The chain runs to 127 residues: Methylglyoxal synthase (127 aa).

Residues 1–127 form the MGS-like domain; it reads MEKKIALIAH…IKGLESLILR (127 aa). Substrate-binding positions include His10, Lys14, 36–39, and 56–57; these read TGTT and SG. Catalysis depends on Asp62, which acts as the Proton donor/acceptor. His89 is a substrate binding site.

This sequence belongs to the methylglyoxal synthase family.

The catalysed reaction is dihydroxyacetone phosphate = methylglyoxal + phosphate. Its function is as follows. Catalyzes the formation of methylglyoxal from dihydroxyacetone phosphate. The sequence is that of Methylglyoxal synthase from Borreliella afzelii (strain PKo) (Borrelia afzelii).